A 215-amino-acid chain; its full sequence is TLD domain-containing protein 2 (215 aa).

The interval 1-46 is disordered; it reads MRGLRWRYTRLPSQVEDTLSGEEGNEEEEEEEAAPDPAAAPEDPTV. A compositionally biased stretch (acidic residues) spans 19-34; that stretch reads LSGEEGNEEEEEEEAA. The TLDc domain maps to 54–215; sequence QVLSASEIRQ…IQELEAWLLS (162 aa).

The protein belongs to the OXR1 family.

This is TLD domain-containing protein 2 (TLDC2) from Homo sapiens (Human).